The following is a 667-amino-acid chain: Flavin-dependent halogenase malA (667 aa).

Residues His48, Glu70, Ile79, and Ser82 each contribute to the FAD site. Lys108 is a catalytic residue. Positions 144, 168, 399, and 412 each coordinate FAD. Glu494 is a substrate binding site. Positions 597, 600, 613, and 616 each coordinate Zn(2+). Residues 621–646 (TEPQTAVTFDPPLTAEEEALLYAAWN) form a flexible region region.

Belongs to the flavin-dependent halogenase family. Zn(2+) is required as a cofactor.

The catalysed reaction is (+)-premalbrancheamide + 2 FAD + 2 chloride + 4 H(+) = (+)-malbrancheamide + 2 FADH2. The enzyme catalyses (+)-premalbrancheamide + FAD + chloride + 2 H(+) = (+)-malbrancheamide B + FADH2. It carries out the reaction (+)-premalbrancheamide + FAD + chloride + 2 H(+) = (+)-isomalbrancheamide B + FADH2. It catalyses the reaction (+)-malbrancheamide B + FAD + chloride + 2 H(+) = (+)-malbrancheamide + FADH2. The catalysed reaction is (+)-isomalbrancheamide B + FAD + chloride + 2 H(+) = (+)-malbrancheamide + FADH2. The enzyme catalyses (+)-premalbrancheamide + bromide + FAD + 2 H(+) = (+)-malbrancheamide C + FADH2. It carries out the reaction (+)-premalbrancheamide + bromide + FAD + 2 H(+) = (+)-isomalbrancheamide C + FADH2. It catalyses the reaction (+)-malbrancheamide B + bromide + FAD + 2 H(+) = (+)-malbrancheamide D + FADH2. The catalysed reaction is (+)-isomalbrancheamide B + bromide + FAD + 2 H(+) = (+)-isomalbrancheamide D + FADH2. It participates in alkaloid biosynthesis. Its function is as follows. Flavin-dependent halogenase; part of the gene cluster that mediates the biosynthesis of malbrancheamide, a dichlorinated fungal indole alkaloid that belongs to a family of natural products containing a characteristic bicyclo[2.2.2]diazaoctane core. The first step of malbrancheamide biosynthesis involves coupling of L-proline and L-tryptophan by malG, a bimodular NRPS, to produce L-Pro-L-Trp aldehyde through reductive offloading. This compound undergoes spontaneous cyclization and dehydration to give a dienamine which is reverse prenylated at C-2 by malE. The other prenyltransferase present in the cluster, malB, displays modest activity, suggesting that may be a redundant gene in the pathway. Subsequently, a [4+2] Diels-Alder cyclo-addition catalyzed by the bifunctional enzyme malC forms the characteristic bicyclo[2.2.2]diazaoctane ring of premalbrancheamid. Finally, the flavin-dependent halogenase malA catalyzes the iterative dichlorination of the indole ring of premalbrancheamide to yield C-9 monochlorinated malbrancheamide B, C-8 monochlorinated isomalbrancheamide B, and dichlorinated malbrancheamide. MalA is also able to brominate premalbrancheamide at C-9 to yield malbrancheamide C, and, to a lesser extend, at C-8 to yield isomalbrancheamide C. Finally, malA can brominate C-9 monochlorinated malbrancheamide B at C-8 to yield malbrancheamide D, or C-8 monochlorinated isomalbrancheamide B at C-9 to produce isomalbrancheamide D. The protein is Flavin-dependent halogenase malA of Malbranchea aurantiaca.